The following is a 427-amino-acid chain: Tol-Pal system protein TolB (427 aa).

A signal peptide spans 1 to 23 (MKLLKRLVSVFAIVLAVGSNAFA).

Belongs to the TolB family. As to quaternary structure, the Tol-Pal system is composed of five core proteins: the inner membrane proteins TolA, TolQ and TolR, the periplasmic protein TolB and the outer membrane protein Pal. They form a network linking the inner and outer membranes and the peptidoglycan layer.

It localises to the periplasm. Functionally, part of the Tol-Pal system, which plays a role in outer membrane invagination during cell division and is important for maintaining outer membrane integrity. In Haemophilus influenzae (strain ATCC 51907 / DSM 11121 / KW20 / Rd), this protein is Tol-Pal system protein TolB.